Here is a 656-residue protein sequence, read N- to C-terminus: Anion exchange transporter (656 aa).

Residues M1–H75 are Cytoplasmic-facing. A helical transmembrane segment spans residues P76–G96. Over R97–R144 the chain is Extracellular. A helical transmembrane segment spans residues I145–L165. Position 166 (Q166) is a topological domain, cytoplasmic. Residues L167–A187 traverse the membrane as a helical segment. Residues T188–L199 are Extracellular-facing. The chain crosses the membrane as a helical span at residues G200–F220. At E221–N222 the chain is on the cytoplasmic side. Residues I223 to L243 traverse the membrane as a helical segment. The Extracellular portion of the chain corresponds to V244–K254. Residues I255 to C275 traverse the membrane as a helical segment. At T276–S306 the chain is on the cytoplasmic side. A helical membrane pass occupies residues A307 to A327. Over Q328–E343 the chain is Extracellular. Residues F344–A364 traverse the membrane as a helical segment. The Cytoplasmic segment spans residues A365–C383. The next 2 membrane-spanning stretches (helical) occupy residues L384–L404 and P405–R425. The Extracellular portion of the chain corresponds to D426–T448. The helical transmembrane segment at I449–L469 threads the bilayer. Topologically, residues G470 to V656 are cytoplasmic. An STAS domain is found at T492 to I641. The membrane targeting stretch occupies residues I641–V656.

Belongs to the SLC26A/SulP transporter (TC 2.A.53) family. In terms of tissue distribution, expressed in the Reissner's membrane epithelial cells in the cochlea (at protein level). Expressed in the retinal pigment epithelium (at protein level). Abundantly expressed in parietal cells on the glandular portion of the stomach. Lower levels are observed in the kidney, with expression in the proximal tubule and thick ascending limb of the loop of Henle. Also expressed in distal segments of nephron, in extraglomerular mesagial cells and a subpopulation of intercalated cells of outer medullary collecting ducts. Expressed in the thyroid gland.

Its subcellular location is the basolateral cell membrane. The protein resides in the recycling endosome membrane. The protein localises to the apical cell membrane. It localises to the lateral cell membrane. It carries out the reaction chloride(in) = chloride(out). It catalyses the reaction iodide(out) = iodide(in). The enzyme catalyses bromide(in) = bromide(out). The catalysed reaction is oxalate(in) = oxalate(out). It carries out the reaction nitrate(in) = nitrate(out). It catalyses the reaction sulfate(in) = sulfate(out). The enzyme catalyses hydrogencarbonate(in) = hydrogencarbonate(out). The catalysed reaction is D-gluconate(in) = D-gluconate(out). It carries out the reaction thiocyanate(in) = thiocyanate(out). It catalyses the reaction hydrogencarbonate(in) + chloride(out) = hydrogencarbonate(out) + chloride(in). With respect to regulation, regulated by pH. Activity inhibited by all inhibitors of several anion channels and transporters, including 4,4'-Di-isothiocyanatostilbene-2,2'-disulfonic acid (DIDS), diphenylamine-2-carboxylic acid, glybenclamide and 5-Nitro-2-(3-phenylpropyl-amino)benzoic acid. In terms of biological role, acts as an anion channel mediating the transport of chloride, bromide, iodide, nitrate, sulfate, gluconate, thiocyanate and bicarbonate ions. Its permeability towards bicarbonate is weak and increases when pH is above 7. Mediates oxalate transport. Mediates thiocyanate transport in retinal pigment epithelium cells. Mediates iodide transport in the thyroid gland, playing an important role in the synthesis of thyroid hormones and the maintenance of thyroid function. Although it is an anion channel, according to PubMed:12736153 and PubMed:19723628 it has been shown to exhibit chloride-bicarbonate exchanger activity. This Mus musculus (Mouse) protein is Anion exchange transporter.